The sequence spans 262 residues: uncharacterized protein (262 aa).

7 helical membrane-spanning segments follow: residues 42–62 (IAKF…TVLN), 71–91 (IINI…LLYF), 115–135 (IGLA…MELI), 145–165 (VVSY…CCFN), 185–205 (LWAY…YSNH), 206–226 (PLMI…PFMI), and 235–255 (AYPS…NYAI).

Its subcellular location is the membrane. This is an uncharacterized protein from Acanthamoeba polyphaga mimivirus (APMV).